A 292-amino-acid polypeptide reads, in one-letter code: MSEIRLYVSTTESQAEQILDLLTEVFGEEDFAIGTTEVDEKRDIWEASVYMMAEDEAQVRSRVETALKSAFPDAQLLREVIPDVDWVVKSLEGLKPVRAGRFLVHGSHDREKVRPGDIAIEIDAGQAFGTGHHGTTAGCLEVIDRVVRSRRVRNALDLGTGSGVLAIAVRKLKNMPVLATDIDPIATRVAAENVRRNGIASGIVTRTAPGFHSTAFSEHGPFDLIIANILARPLIRMAPQLAAHLAPGGSVILSGILAAQRWKVIAAYSGARLRHVRTIWRNGWVTIHFDRP.

S-adenosyl-L-methionine is bound by residues Thr-136, Gly-159, Asp-181, and Asn-228.

The protein belongs to the methyltransferase superfamily. PrmA family.

Its subcellular location is the cytoplasm. It carries out the reaction L-lysyl-[protein] + 3 S-adenosyl-L-methionine = N(6),N(6),N(6)-trimethyl-L-lysyl-[protein] + 3 S-adenosyl-L-homocysteine + 3 H(+). Methylates ribosomal protein L11. The chain is Ribosomal protein L11 methyltransferase from Rhizobium etli (strain ATCC 51251 / DSM 11541 / JCM 21823 / NBRC 15573 / CFN 42).